The following is a 62-amino-acid chain: Large ribosomal subunit protein bL32 (62 aa).

The segment covering 1–16 (MAVPKRKTSPSRRGMR) has biased composition (basic residues). The segment at 1–62 (MAVPKRKTSP…QILKPKTAEV (62 aa)) is disordered. Positions 28 to 44 (VEDKDSGELRRPHHLDL) are enriched in basic and acidic residues.

It belongs to the bacterial ribosomal protein bL32 family.

In Azorhizobium caulinodans (strain ATCC 43989 / DSM 5975 / JCM 20966 / LMG 6465 / NBRC 14845 / NCIMB 13405 / ORS 571), this protein is Large ribosomal subunit protein bL32.